Here is a 29-residue protein sequence, read N- to C-terminus: Galanin (29 aa).

The residue at position 29 (A29) is an Alanine amide.

It belongs to the galanin family.

It is found in the secreted. Functionally, contracts smooth muscle of the gastrointestinal and genitourinary tract, regulates growth hormone release, modulates insulin release, and may be involved in the control of adrenal secretion. The chain is Galanin (gal) from Pelophylax ridibundus (Marsh frog).